The chain runs to 266 residues: Maltodextrose utilization protein MalA (266 aa).

Has a role in maltotetraose utilization. In Streptococcus pneumoniae (strain ATCC BAA-255 / R6), this protein is Maltodextrose utilization protein MalA (malA).